A 432-amino-acid chain; its full sequence is Serine/threonine-protein kinase stk11 (432 aa).

Positions 52 to 312 (YLMGDLLGEG…IQQIRQHNWF (261 aa)) constitute a Protein kinase domain. ATP is bound by residues 58–66 (LGEGSYGKV) and Lys-81. The active-site Proton acceptor is the Asp-179. A Phosphothreonine; by autocatalysis modification is found at Thr-192. Positions 398–432 (TESQLKTERRVSSSSQRKASTTGSKVRKLSACKQQ) are disordered. Over residues 409–421 (SSSSQRKASTTGS) the composition is skewed to polar residues. The segment covering 422–432 (KVRKLSACKQQ) has biased composition (basic residues). Phosphoserine; by PKA is present on Ser-427.

This sequence belongs to the protein kinase superfamily. CAMK Ser/Thr protein kinase family. LKB1 subfamily. As to quaternary structure, catalytic component of a trimeric complex composed of STK11/LKB1, STRAD (STRADA or STRADB) and CAB39/MO25 (CAB39/MO25alpha or CAB39L/MO25beta). Mg(2+) is required as a cofactor. The cofactor is Mn(2+). In terms of processing, phosphorylated by a cAMP-dependent protein kinase. Autophosphorylated in a reaction that prefers Mn(2+) to Mg(2+). As to expression, oocytes, eggs and early embryos.

Its subcellular location is the nucleus. It localises to the cytoplasm. The catalysed reaction is L-seryl-[protein] + ATP = O-phospho-L-seryl-[protein] + ADP + H(+). It catalyses the reaction L-threonyl-[protein] + ATP = O-phospho-L-threonyl-[protein] + ADP + H(+). Functionally, tumor suppressor serine/threonine-protein kinase that controls the activity of AMP-activated protein kinase (AMPK) family members, thereby playing a role in various processes such as cell metabolism, cell polarity, apoptosis and DNA damage response. Acts by phosphorylating the T-loop of AMPK family proteins, leading to promote their activity. This is Serine/threonine-protein kinase stk11 from Xenopus laevis (African clawed frog).